The following is a 195-amino-acid chain: dCTP deaminase (195 aa).

DCTP-binding positions include 110-115, Asp128, 136-138, Tyr171, Lys178, and Gln182; these read RSSLAR and VLE. The Proton donor/acceptor role is filled by Glu138. The tract at residues 171 to 195 is disordered; that stretch reads YSSRKDAKYKNQQSAVASRIDEDKE.

The protein belongs to the dCTP deaminase family. Homotrimer.

It catalyses the reaction dCTP + H2O + H(+) = dUTP + NH4(+). Its pathway is pyrimidine metabolism; dUMP biosynthesis; dUMP from dCTP (dUTP route): step 1/2. In terms of biological role, catalyzes the deamination of dCTP to dUTP. The polypeptide is dCTP deaminase (Haemophilus influenzae (strain ATCC 51907 / DSM 11121 / KW20 / Rd)).